The primary structure comprises 73 residues: DNA-directed RNA polymerase subunit omega (73 aa).

Belongs to the RNA polymerase subunit omega family. As to quaternary structure, the RNAP catalytic core consists of 2 alpha, 1 beta, 1 beta' and 1 omega subunit. When a sigma factor is associated with the core the holoenzyme is formed, which can initiate transcription.

It carries out the reaction RNA(n) + a ribonucleoside 5'-triphosphate = RNA(n+1) + diphosphate. Functionally, promotes RNA polymerase assembly. Latches the N- and C-terminal regions of the beta' subunit thereby facilitating its interaction with the beta and alpha subunits. The protein is DNA-directed RNA polymerase subunit omega of Lactobacillus delbrueckii subsp. bulgaricus (strain ATCC BAA-365 / Lb-18).